The following is a 277-amino-acid chain: 2-dehydro-3-deoxyphosphooctonate aldolase (277 aa).

The protein belongs to the KdsA family.

It localises to the cytoplasm. It carries out the reaction D-arabinose 5-phosphate + phosphoenolpyruvate + H2O = 3-deoxy-alpha-D-manno-2-octulosonate-8-phosphate + phosphate. The protein operates within carbohydrate biosynthesis; 3-deoxy-D-manno-octulosonate biosynthesis; 3-deoxy-D-manno-octulosonate from D-ribulose 5-phosphate: step 2/3. Its pathway is bacterial outer membrane biogenesis; lipopolysaccharide biosynthesis. This Brucella anthropi (strain ATCC 49188 / DSM 6882 / CCUG 24695 / JCM 21032 / LMG 3331 / NBRC 15819 / NCTC 12168 / Alc 37) (Ochrobactrum anthropi) protein is 2-dehydro-3-deoxyphosphooctonate aldolase.